Consider the following 182-residue polypeptide: Photosystem I assembly protein Ycf4 (182 aa).

A run of 2 helical transmembrane segments spans residues 22–42 (WAII…SSYL) and 66–86 (FYGI…LFSV).

This sequence belongs to the Ycf4 family.

The protein localises to the plastid. It localises to the chloroplast thylakoid membrane. Seems to be required for the assembly of the photosystem I complex. This is Photosystem I assembly protein Ycf4 from Tupiella akineta (Green alga).